Reading from the N-terminus, the 160-residue chain is Lymphocyte antigen 96 (160 aa).

A signal peptide spans 1–16 (MFPFMLFSTLFSSIFT). Cystine bridges form between Cys-25-Cys-51, Cys-37-Cys-148, and Cys-95-Cys-105. Asn-26 carries an N-linked (GlcNAc...) asparagine glycan. N-linked (GlcNAc...) asparagine glycosylation occurs at Asn-114. Positions 119–123 (FSFQG) are interaction with lipopolysaccharide. N-linked (GlcNAc...) asparagine glycosylation is present at Asn-150.

In terms of assembly, heterogeneous homomer formed from homodimers; disulfide-linked. Belongs to the lipopolysaccharide (LPS) receptor, a multi-protein complex containing at least CD14, LY96 and TLR4. Binds to the extracellular domains of TLR2 and TLR4. Ligand binding induces interaction with TLR4 and oligomerization of the complex. N-glycosylated.

It localises to the secreted. It is found in the extracellular space. Functionally, binds bacterial lipopolysaccharide (LPS). Cooperates with TLR4 in the innate immune response to bacterial lipopolysaccharide (LPS), and with TLR2 in the response to cell wall components from Gram-positive and Gram-negative bacteria. Enhances TLR4-dependent activation of NF-kappa-B. Cells expressing both LY96 and TLR4, but not TLR4 alone, respond to LPS. The protein is Lymphocyte antigen 96 (LY96) of Bos taurus (Bovine).